Reading from the N-terminus, the 592-residue chain is Syntaxin-binding protein 3 (592 aa).

The tract at residues 1 to 255 (MAPPVAERGL…STVLHELTFQ (255 aa)) is mediates interaction with DOC2B.

The protein belongs to the STXBP/unc-18/SEC1 family. In terms of assembly, interacts with DOC2B; the interaction is direct, occurs at the cell membrane, excludes interaction with STX4 and regulates glucose-stimulated insulin secretion. Interacts with STX4. In terms of processing, phosphorylated by PKC in platelets in response to thrombin stimulation; phosphorylation inhibits binding to STX4. In terms of tissue distribution, megakaryocytes and platelets.

The protein localises to the cytoplasm. The protein resides in the cytosol. It localises to the cell membrane. Functionally, together with STX4 and VAMP2, may play a role in insulin-dependent movement of GLUT4 and in docking/fusion of intracellular GLUT4-containing vesicles with the cell surface in adipocytes. The chain is Syntaxin-binding protein 3 (STXBP3) from Homo sapiens (Human).